We begin with the raw amino-acid sequence, 395 residues long: Acetate kinase (395 aa).

N8 serves as a coordination point for Mg(2+). K15 is an ATP binding site. Position 89 (R89) interacts with substrate. D146 functions as the Proton donor/acceptor in the catalytic mechanism. ATP-binding positions include 206–210 (HLGNG), 281–283 (DLR), and 329–333 (GIGEN). E382 provides a ligand contact to Mg(2+).

The protein belongs to the acetokinase family. Homodimer. Mg(2+) serves as cofactor. It depends on Mn(2+) as a cofactor.

It is found in the cytoplasm. The catalysed reaction is acetate + ATP = acetyl phosphate + ADP. It participates in metabolic intermediate biosynthesis; acetyl-CoA biosynthesis; acetyl-CoA from acetate: step 1/2. Functionally, catalyzes the formation of acetyl phosphate from acetate and ATP. Can also catalyze the reverse reaction. This Bacillus velezensis (strain DSM 23117 / BGSC 10A6 / LMG 26770 / FZB42) (Bacillus amyloliquefaciens subsp. plantarum) protein is Acetate kinase.